The primary structure comprises 922 residues: GPI inositol-deacylase (922 aa).

Over 1-11 (MFLHSVNLWNL) the chain is Cytoplasmic. Residues 12-32 (AFYVFMVFLATLGLWDVFFGF) traverse the membrane as a helical segment. Residues 33–597 (EENKCSMSYM…GQVVRFHGGA (565 aa)) are Lumenal-facing. The active site involves serine 174. N-linked (GlcNAc...) asparagine glycosylation is found at asparagine 363, asparagine 402, and asparagine 558. A helical membrane pass occupies residues 598 to 618 (LPAYVVSSILLAYGGQLYSLL). Residues 619–641 (STGYCLEYSTILDKEAKPYKVDP) are Cytoplasmic-facing. A helical transmembrane segment spans residues 642 to 662 (FVIMIKFLLGYKWFKELWDAV). Topologically, residues 663–668 (LLPELD) are lumenal. The helical transmembrane segment at 669-689 (AIVLTSQSMCFPLVSLILFLF) threads the bilayer. The Cytoplasmic segment spans residues 690 to 694 (GTCTA). The chain crosses the membrane as a helical span at residues 695–715 (YWSGLLSSTSVQLLSSLWLAL). Topologically, residues 716–733 (KRPAELPKDIKVMSPDLP) are lumenal. A helical membrane pass occupies residues 734–754 (VLTVVFLIVSWTTCGALAILL). Residues 755–817 (SYLYYVFKVV…DAEDSLRMHS (63 aa)) lie on the Cytoplasmic side of the membrane. The disordered stretch occupies residues 776-798 (NQPVNPKHSRRSEKKSNHHKDSA). The segment covering 782–793 (KHSRRSEKKSNH) has biased composition (basic residues). Residues 818 to 838 (TVINLLTWVVLLSMPSLIYWL) form a helical membrane-spanning segment. Residues 839-894 (KNLRYYFKLSPDPCKPLAFLLIPAIAILGNTHTVSVKSSKLLKTVSQFPLPLAVGV) lie on the Lumenal side of the membrane. The helical transmembrane segment at 895–915 (IAFGSSHLYRVPCFVIIPLVF) threads the bilayer. The Cytoplasmic portion of the chain corresponds to 916–922 (HALCNFM).

This sequence belongs to the GPI inositol-deacylase family.

Its subcellular location is the endoplasmic reticulum membrane. In terms of biological role, GPI inositol-deacylase that catalyzes the remove of the acyl chain linked to the 2-OH position of inositol ring from the GPI-anchored protein (GPI-AP) in the endoplasmic reticulum. Initiates the post-attachment remodeling phase of GPI-AP biogenesis and participates in endoplasmic reticulum (ER)-to-Golgi transport of GPI-anchored protein. This Mus musculus (Mouse) protein is GPI inositol-deacylase.